A 291-amino-acid chain; its full sequence is Peptide methionine sulfoxide reductase MsrB/MsrA (291 aa).

Positions 1 to 124 (MLANLQHLSD…NSAALRFVAR (124 aa)) constitute a MsrB domain. Catalysis depends on Cys113, which acts as the Nucleophile. Positions 127 to 284 (GTALFAAGCF…PGGYCHVSLH (158 aa)) are peptide methionine sulfoxide reductase A. Cys135 is an active-site residue.

The protein in the N-terminal section; belongs to the MsrB Met sulfoxide reductase family. This sequence in the C-terminal section; belongs to the MsrA Met sulfoxide reductase family.

It carries out the reaction L-methionyl-[protein] + [thioredoxin]-disulfide + H2O = L-methionyl-(R)-S-oxide-[protein] + [thioredoxin]-dithiol. It catalyses the reaction L-methionyl-[protein] + [thioredoxin]-disulfide + H2O = L-methionyl-(S)-S-oxide-[protein] + [thioredoxin]-dithiol. The enzyme catalyses [thioredoxin]-disulfide + L-methionine + H2O = L-methionine (S)-S-oxide + [thioredoxin]-dithiol. Its function is as follows. Has an important function as a repair enzyme for proteins that have been inactivated by oxidation. Catalyzes the reversible oxidation-reduction of methionine sulfoxide in proteins to methionine. This chain is Peptide methionine sulfoxide reductase MsrB/MsrA (msrAB), found in Treponema pallidum (strain Nichols).